The primary structure comprises 692 residues: DNA-binding protein RFX2 (692 aa).

The disordered stretch occupies residues 1 to 26 (MQNSEGGADSPATVALRPAAQPVPAS). Serine 26 carries the post-translational modification Phosphoserine. The segment at residues 169–244 (TLQWLLDNYE…YHYYGIRLKP (76 aa)) is a DNA-binding region (RFX-type winged-helix). The disordered stretch occupies residues 261 to 296 (RQQPTHQKPRYRPAQKSDSLGDGSAHSNMHSTPEQA). The span at 285–294 (AHSNMHSTPE) shows a compositional bias: polar residues. Phosphoserine is present on serine 386. The span at 660-685 (DGHSSEADVDGRSLGEPLVKRERSDP) shows a compositional bias: basic and acidic residues. The disordered stretch occupies residues 660–692 (DGHSSEADVDGRSLGEPLVKRERSDPSHPLQGI).

This sequence belongs to the RFX family. As to quaternary structure, homodimer; probably only forms homodimers in testis. Heterodimer; heterodimerizes with RFX1 and RFX3. Expressed at highest level in testis. Expressed at lower level in thymus. Also expressed in stomach, kidney, liver, brain and heart. Weakly expressed in spleen and lung. Within testis, most abundantly present in spermatocytes: present from pachytene spermatocytes to early spermatids (at protein level). Also present in non-germinal tissues.

It localises to the nucleus. The protein resides in the cytoplasm. Transcription factor that acts as a key regulator of spermatogenesis. Acts by regulating expression of genes required for the haploid phase during spermiogenesis, such as genes required for cilium assembly and function. Recognizes and binds the X-box, a regulatory motif with DNA sequence 5'-GTNRCC(0-3N)RGYAAC-3' present on promoters. Probably activates transcription of the testis-specific histone gene H1-6. The protein is DNA-binding protein RFX2 (Rfx2) of Rattus norvegicus (Rat).